We begin with the raw amino-acid sequence, 173 residues long: MAEKRNIFLVGPMGAGKSTIGRQLSQQLNMEFFDSDQEIEKRTGADISWVFDVEGESGFRLREQRVIDELTTKQGIVLATGGGSVKFRETRNFLSSRGIVVYLETTIEKQLARTKRDKKRPLLQNADSNRMILENLAYERNPFYEEIADIKVKTDDQSAKSVAFNIIRLLEEI.

14-19 (GAGKST) serves as a coordination point for ATP. S18 is a binding site for Mg(2+). 3 residues coordinate substrate: D36, R60, and G82. Residue R120 participates in ATP binding. R140 serves as a coordination point for substrate. Position 157 (Q157) interacts with ATP.

This sequence belongs to the shikimate kinase family. In terms of assembly, monomer. It depends on Mg(2+) as a cofactor.

The protein localises to the cytoplasm. It carries out the reaction shikimate + ATP = 3-phosphoshikimate + ADP + H(+). The protein operates within metabolic intermediate biosynthesis; chorismate biosynthesis; chorismate from D-erythrose 4-phosphate and phosphoenolpyruvate: step 5/7. In terms of biological role, catalyzes the specific phosphorylation of the 3-hydroxyl group of shikimic acid using ATP as a cosubstrate. This Buchnera aphidicola subsp. Acyrthosiphon pisum (strain APS) (Acyrthosiphon pisum symbiotic bacterium) protein is Shikimate kinase.